A 502-amino-acid polypeptide reads, in one-letter code: Hexokinase-4 (502 aa).

The chain crosses the membrane as a helical span at residues 4–24 (VLVMLTAAAAVVACSVATVMV). Positions 35-491 (RRVVGLLKDL…SSIGSALLLA (457 aa)) constitute a Hexokinase domain. Residues 90–228 (NGSETGTYYA…GLDIRVAALV (139 aa)) are hexokinase small subdomain. Gly104 and Ser105 together coordinate ADP. D-glucose-binding residues include Thr194, Lys195, Asn229, and Asp230. The interval 229–480 (NDTVGALSFG…QHVVVKAMED (252 aa)) is hexokinase large subdomain. Thr253 serves as a coordination point for ADP. D-glucose-binding residues include Asn256, Glu284, and Glu315. Gly445 contacts ADP.

The protein belongs to the hexokinase family.

It localises to the mitochondrion outer membrane. The catalysed reaction is a D-hexose + ATP = a D-hexose 6-phosphate + ADP + H(+). The enzyme catalyses D-fructose + ATP = D-fructose 6-phosphate + ADP + H(+). It catalyses the reaction D-glucose + ATP = D-glucose 6-phosphate + ADP + H(+). It participates in carbohydrate metabolism; hexose metabolism. It functions in the pathway carbohydrate degradation; glycolysis; D-glyceraldehyde 3-phosphate and glycerone phosphate from D-glucose: step 1/4. Its function is as follows. Fructose and glucose phosphorylating enzyme. May be involved in the phosphorylation of glucose during the export from mitochondrion to cytosol. The polypeptide is Hexokinase-4 (Arabidopsis thaliana (Mouse-ear cress)).